Reading from the N-terminus, the 200-residue chain is Holliday junction resolvase RecU (200 aa).

The disordered stretch occupies residues 1 to 25 (MTIRYPNGKRYNQASQPHKTPIKKH). The Mg(2+) site is built by Thr85, Asp87, Glu100, and Gln119.

This sequence belongs to the RecU family. Mg(2+) is required as a cofactor.

The protein resides in the cytoplasm. The enzyme catalyses Endonucleolytic cleavage at a junction such as a reciprocal single-stranded crossover between two homologous DNA duplexes (Holliday junction).. Its function is as follows. Endonuclease that resolves Holliday junction intermediates in genetic recombination. Cleaves mobile four-strand junctions by introducing symmetrical nicks in paired strands. Promotes annealing of linear ssDNA with homologous dsDNA. Required for DNA repair, homologous recombination and chromosome segregation. This Bacillus cereus (strain ZK / E33L) protein is Holliday junction resolvase RecU.